Consider the following 263-residue polypeptide: HTH-type transcriptional repressor NanR (263 aa).

A disordered region spans residues 1-25; sequence MDVMNAFDSQAEDSPTSLGRSLRRR. In terms of domain architecture, HTH gntR-type spans 30–98; that stretch reads KKLSEMVEEE…NGERARVSRP (69 aa). Positions 58-77 form a DNA-binding region, H-T-H motif; the sequence is ERELMAFFNVGRPSVREALA.

This sequence belongs to the NanR family.

In terms of biological role, transcriptional repressor that controls expression of the genes required for the catabolism of sialic acids. This chain is HTH-type transcriptional repressor NanR, found in Salmonella schwarzengrund (strain CVM19633).